Consider the following 273-residue polypeptide: Terpene cyclase ascF (273 aa).

7 helical membrane passes run valine 18–alanine 38, methionine 49–valine 69, methionine 78–leucine 98, isoleucine 113–isoleucine 133, tyrosine 153–valine 173, glycine 178–methionine 198, and alanine 217–leucine 237.

Belongs to the paxB family.

The protein localises to the membrane. It carries out the reaction ilicicolin A epoxide = ilicicolin C. The protein operates within secondary metabolite biosynthesis; terpenoid biosynthesis. Its function is as follows. Terpene cyclase; part of the asc-1 gene cluster that mediates the biosynthesis of both ascochlorin and ascofuranone, a strong inhibitor of cyanide-insensitive alternative oxidases and a promising drug candidate against African trypanosomiasis. The first step in the pathway is performed by the non-reducing polyketide synthase ascC that produces orsellinic acid by condensing acetyl-CoA with 3 malonyl-CoA units. Orsellinic acid is then prenylated by the prenyltransferase ascA to yield ilicicolinic acid B. Ilicicolinic acid B is further reduced to ilicicolin B by the reductase ascB. The halogenase ascD then chlorinates ilicicolin B to produce ilicicolin A which is converted to ilicicolin A epoxide by the cytochrome P450 monooxygenase ascE that catalyzes stereoselective epoxidation of the terminal double bond of the prenyl group. Ilicicolin A epoxide is the last common precursor for the biosynthesis of ascofuranone and ascochlorin. The terpene cyclase ascF produces a monocyclic terpene, and the cyclization reaction is proposed to be initiated by protonation of the terminal epoxide of ilicicolin A epoxide to generate a monocyclic tertiarycation, which is followed by a series of hydride and methyl shifts with abstraction of proton, leading to the formation of the (14S,15R,19R)-trimethylcyclohexanone ring structure of ilicicolin C, which is finally reduced to ascochlorin by the dehydrogenase ascG. On the other hand, ilicicolin A epoxide is hydroxylated by the cytochrome P450 monooxygenase ascH, and the resultant product is cyclized by the terpene cyclase ascI to ascofuranol via protonation-initiated epoxide ring opening, which facilitates the 6-endo-tet cyclization to form the tetrahy-drofuran ring. Finally, ascofuranol is oxidized into ascofuranone by ascJ. In Acremonium egyptiacum (Oospora egyptiaca), this protein is Terpene cyclase ascF.